The primary structure comprises 301 residues: MLKVTIELGIAPIGWTNDDMPELGKEVTFEQAIDEMTLAGYKGTEVGNKYPKDPKTLKHFLDLRHLKIASAWFSAFLTTKPYEETEAAFIKHRDFLHAMGAKVIVVAEQGHSVQGLLDKSVFDDKPHFTDDEWERLATGLERLGDRAREVGMQIVYHHHMGTGVQTTAEIDRLMTMTDPDKVSLLFDTGHLVLSGEDPLTIFNRYQDRIKHIHFKDVRQQQADEEHKDHLSFLAGVKNGMFTVPGDGMIDFKPIWEAIQESGYDGWIIVEAEQDPAKANPFEYALKAKKYLDATMNIPQSA.

It belongs to the IolE/MocC family. It depends on glutathione as a cofactor. The cofactor is Co(2+). Mn(2+) is required as a cofactor.

It carries out the reaction scyllo-inosose = 3D-3,5/4-trihydroxycyclohexane-1,2-dione + H2O. It participates in polyol metabolism; myo-inositol degradation into acetyl-CoA; acetyl-CoA from myo-inositol: step 2/7. Functionally, catalyzes the dehydration of inosose (2-keto-myo-inositol, 2KMI or 2,4,6/3,5-pentahydroxycyclohexanone) to 3D-(3,5/4)-trihydroxycyclohexane-1,2-dione (D-2,3-diketo-4-deoxy-epi-inositol). The sequence is that of Inosose dehydratase from Lacticaseibacillus casei (strain BL23) (Lactobacillus casei).